Consider the following 419-residue polypeptide: E3 ubiquitin-protein ligase pellino homolog 2 (419 aa).

An FHA; atypical domain is found at Glu-15–Ser-202.

This sequence belongs to the pellino family. Interacts with TRAF6, IRAK4 and MAP3K7. Interacts with IRAK1. Interacts with BCL10; this interaction is impaired by SOCS3. Post-translationally, phosphorylated by IRAK1 and IRAK4 enhancing its E3 ligase activity. As to expression, widely expressed both in embryos and adult. Weakly or not expressed in spleen and thymus.

It catalyses the reaction S-ubiquitinyl-[E2 ubiquitin-conjugating enzyme]-L-cysteine + [acceptor protein]-L-lysine = [E2 ubiquitin-conjugating enzyme]-L-cysteine + N(6)-ubiquitinyl-[acceptor protein]-L-lysine.. It participates in protein modification; protein ubiquitination. Its function is as follows. E3 ubiquitin ligase catalyzing the covalent attachment of ubiquitin moieties onto substrate proteins. Involved in the TLR and IL-1 signaling pathways via interaction with the complex containing IRAK kinases and TRAF6. Mediates IL1B-induced IRAK1 'Lys-63'-linked polyubiquitination and possibly 'Lys-48'-linked ubiquitination. May be important for LPS- and IL1B-induced MAP3K7-dependent, but not MAP3K3-dependent, NF-kappa-B activation. Can activate the MAP (mitogen activated protein) kinase pathway leading to activation of ELK1. The polypeptide is E3 ubiquitin-protein ligase pellino homolog 2 (Peli2) (Mus musculus (Mouse)).